The sequence spans 590 residues: Aspartate--tRNA(Asp/Asn) ligase (590 aa).

Glutamate 175 contacts L-aspartate. The interval 199-202 (QQFK) is aspartate. L-aspartate contacts are provided by arginine 221 and histidine 452. 221–223 (RDE) provides a ligand contact to ATP. An ATP-binding site is contributed by glutamate 485. An L-aspartate-binding site is contributed by arginine 492. 537-540 (GIDR) is an ATP binding site.

Belongs to the class-II aminoacyl-tRNA synthetase family. Type 1 subfamily. In terms of assembly, homodimer.

The protein resides in the cytoplasm. The enzyme catalyses tRNA(Asx) + L-aspartate + ATP = L-aspartyl-tRNA(Asx) + AMP + diphosphate. Functionally, aspartyl-tRNA synthetase with relaxed tRNA specificity since it is able to aspartylate not only its cognate tRNA(Asp) but also tRNA(Asn). Reaction proceeds in two steps: L-aspartate is first activated by ATP to form Asp-AMP and then transferred to the acceptor end of tRNA(Asp/Asn). This chain is Aspartate--tRNA(Asp/Asn) ligase, found in Dinoroseobacter shibae (strain DSM 16493 / NCIMB 14021 / DFL 12).